Consider the following 664-residue polypeptide: Exoribonuclease 2 (664 aa).

Residues 193–521 form the RNB domain; it reads RIDMTHIPFV…INHRMLKALI (329 aa). The region spanning 568 to 650 is the S1 motif domain; that stretch reads QTLFTGEIFD…ENRSLVAKPT (83 aa).

This sequence belongs to the RNR ribonuclease family. RNase II subfamily.

The protein resides in the cytoplasm. It catalyses the reaction Exonucleolytic cleavage in the 3'- to 5'-direction to yield nucleoside 5'-phosphates.. Its function is as follows. Involved in mRNA degradation. Hydrolyzes single-stranded polyribonucleotides processively in the 3' to 5' direction. The sequence is that of Exoribonuclease 2 from Vibrio vulnificus (strain CMCP6).